Reading from the N-terminus, the 423-residue chain is tRNA(Met) cytidine acetate ligase (423 aa).

ATP-binding positions include 7 to 20 (VVEY…HLYH), G102, N165, and R190.

Belongs to the TmcAL family.

It localises to the cytoplasm. It catalyses the reaction cytidine(34) in elongator tRNA(Met) + acetate + ATP = N(4)-acetylcytidine(34) in elongator tRNA(Met) + AMP + diphosphate. Catalyzes the formation of N(4)-acetylcytidine (ac(4)C) at the wobble position of elongator tRNA(Met), using acetate and ATP as substrates. First activates an acetate ion to form acetyladenylate (Ac-AMP) and then transfers the acetyl group to tRNA to form ac(4)C34. This Thermosipho africanus (strain TCF52B) protein is tRNA(Met) cytidine acetate ligase.